The following is a 1170-amino-acid chain: DNA excision repair protein ERCC-5 (1170 aa).

The tract at residues 1-78 is N-domain; it reads MGVQGLWKLL…RIRPIFVFDG (78 aa). Lys-8 is subject to N6-acetyllysine. Asp-30 is a binding site for Mg(2+). Residues 31-67 are DNA-binding; may bind to the undamaged single-strand DNA of the DNA repair bubble; sequence ISIWLNQALKGVRDSHGNVIENAHLLTLFHRLCKLLF. Position 77 (Asp-77) interacts with Mg(2+). The tract at residues 79–784 is spacer region; that stretch reads DAPLLKKQTL…LRLFGVPYIQ (706 aa). Disordered stretches follow at residues 304–479, 520–587, and 600–701; these read DSES…RCDT, HVSG…PKAC, and LENA…ECLL. Over residues 306–323 the composition is skewed to low complexity; the sequence is ESLPSSSNVHSVSSNLKS. Composition is skewed to basic and acidic residues over residues 324 to 336 and 363 to 373; these read SPHE…REPE and SREGRQSKERN. Phosphoserine is present on Ser-384. The span at 455-474 shows a compositional bias: polar residues; sequence TSGSSANGQTDSAHSFTTAS. Positions 539 to 551 are enriched in basic and acidic residues; the sequence is THSDQGIDIHPED. Positions 659–676 are enriched in polar residues; that stretch reads SVVSNSELQTESSEASTH. Over residues 677 to 698 the composition is skewed to basic and acidic residues; sequence LSEKDAEEPRETLEEGTSRDTE. A phosphoserine mark is found at Ser-704 and Ser-705. The segment at 785–880 is I-domain; the sequence is APMEAEAQCA…VTAMEILNEF (96 aa). Mg(2+) is bound by residues Glu-788, Glu-790, Asp-809, and Asp-811. Residues 819-835 form a DNA-binding; may bind to the undamaged single-strand DNA of the DNA repair bubble region; that stretch reads HVYKNFFNKNKFVEYYQ. The interval 847–879 is DNA-binding; H2TH (helix-2turn-helix) motif which binds double-stranded DNA; that stretch reads RNKLINLAYLLGSDYTEGIPTVGCVTAMEILNE. Asp-860 lines the Mg(2+) pocket. Residues 911 to 917 form a DNA-binding; may bind double-stranded DNA region; it reads TKVKKKL. The segment at 980–1008 is interaction with PCNA; the sequence is LKHLNAHQTQLRIDSFFRLAQQEKQDAKL. The segment at 1010 to 1170 is interaction with ERCC6/CSB; it reads KSHRLNRAVT…KSMKRRKKKT (161 aa). The disordered stretch occupies residues 1033–1146; it reads LTKVTEALDD…DDEDKAKTVL (114 aa). Basic and acidic residues predominate over residues 1041-1060; it reads DDAKGKTQKRELPYKKETSV. The short motif at 1049–1065 is the Nuclear localization signal 1 element; the sequence is KRELPYKKETSVPKRRR. Residues 1094–1110 are compositionally biased toward polar residues; sequence SVMSARQRSAAESSKIS. Positions 1153–1170 match the Nuclear localization signal 2 motif; the sequence is FGKKKLKLKSMKRRKKKT.

This sequence belongs to the XPG/RAD2 endonuclease family. XPG subfamily. In terms of assembly, monomer. Homodimer. Component of the homologous recombination repair (HR) complex composed of ERCC5/XPG, BRCA2, PALB2, DSS1 and RAD51. Within the complex, interacts with BRCA2 and PALB2. Interacts with RNA polymerase II. Interacts (via C-terminus) with ERCC6/CSB; the interaction stimulates ERCC6/CSB binding to the DNA repair bubble and ERCC6/CSB ATPase activity. May form a complex composed of RNA polymerase II, ERCC6/CSB and ERCC5/XPG which associates with the DNA repair bubble during transcription-coupled nucleotide excision repair. Interacts with BRCA1; the interaction promotes the release of BRCA1 from DNA. Interacts with PCNA. Interacts with NTHL1; the interaction stimulates NTHL1 activity and NTHL1 binding to its DNA substrate. Mg(2+) is required as a cofactor.

Its subcellular location is the nucleus. The protein localises to the chromosome. In terms of biological role, single-stranded structure-specific DNA endonuclease involved in DNA excision repair. Makes the 3'incision in DNA nucleotide excision repair (NER). Binds and bends DNA repair bubble substrate and breaks base stacking at the single-strand/double-strand DNA junction of the DNA bubble. Plays a role in base excision repair (BER) by promoting the binding of DNA glycosylase NTHL1 to its substrate and increasing NTHL1 catalytic activity that removes oxidized pyrimidines from DNA. Involved in transcription-coupled nucleotide excision repair (TCR) which allows RNA polymerase II-blocking lesions to be rapidly removed from the transcribed strand of active genes. Functions during the initial step of TCR in cooperation with ERCC6/CSB to recognized stalled RNA polymerase II. Also, stimulates ERCC6/CSB binding to the DNA repair bubble and ERCC6/CSB ATPase activity. Required for DNA replication fork maintenance and preservation of genomic stability. Involved in homologous recombination repair (HRR) induced by DNA replication stress by recruiting RAD51, BRCA2, and PALB2 to the damaged DNA site. During HRR, binds to the replication fork with high specificity and stabilizes it. Also, acts upstream of HRR, to promote the release of BRCA1 from DNA. In Mus musculus (Mouse), this protein is DNA excision repair protein ERCC-5 (Ercc5).